Reading from the N-terminus, the 240-residue chain is Phosphoribosyl isomerase A (240 aa).

The active-site Proton acceptor is the Asp11. Asp130 (proton donor) is an active-site residue.

It belongs to the HisA/HisF family. In terms of assembly, monomer.

The protein resides in the cytoplasm. The enzyme catalyses 1-(5-phospho-beta-D-ribosyl)-5-[(5-phospho-beta-D-ribosylamino)methylideneamino]imidazole-4-carboxamide = 5-[(5-phospho-1-deoxy-D-ribulos-1-ylimino)methylamino]-1-(5-phospho-beta-D-ribosyl)imidazole-4-carboxamide. It catalyses the reaction N-(5-phospho-beta-D-ribosyl)anthranilate = 1-(2-carboxyphenylamino)-1-deoxy-D-ribulose 5-phosphate. It participates in amino-acid biosynthesis; L-histidine biosynthesis; L-histidine from 5-phospho-alpha-D-ribose 1-diphosphate: step 4/9. The protein operates within amino-acid biosynthesis; L-tryptophan biosynthesis; L-tryptophan from chorismate: step 3/5. Its function is as follows. Catalyzes the isomerization of the aminoaldose moiety of ProFAR to the aminoketose of PRFAR in the biosynthesis pathway for histidine and the isomerization of the aminoaldose PRA to the aminoketose CdRP in the biosynthsis pathway for tryptophan. This Streptomyces coelicolor (strain ATCC BAA-471 / A3(2) / M145) protein is Phosphoribosyl isomerase A (priA).